The sequence spans 872 residues: HTH-type transcriptional regulator AlkS (872 aa).

The 66-residue stretch at 805-870 (LTNTQSTITI…RAVSEARLRG (66 aa)) folds into the HTH luxR-type domain. The H-T-H motif DNA-binding region spans 829 to 848 (NKEIAERLLITEDTVKWHLK).

It participates in hydrocarbon metabolism; alkane degradation. In terms of biological role, this protein activates the expression of AlkB1 in the presence of alkanes. In Alcanivorax borkumensis (strain ATCC 700651 / DSM 11573 / NCIMB 13689 / SK2), this protein is HTH-type transcriptional regulator AlkS (alkS).